The sequence spans 488 residues: N-succinylglutamate 5-semialdehyde dehydrogenase (488 aa).

Residue 221-226 (GSSRTG) coordinates NAD(+). Residues Glu244 and Cys278 contribute to the active site.

Belongs to the aldehyde dehydrogenase family. AstD subfamily.

The enzyme catalyses N-succinyl-L-glutamate 5-semialdehyde + NAD(+) + H2O = N-succinyl-L-glutamate + NADH + 2 H(+). It functions in the pathway amino-acid degradation; L-arginine degradation via AST pathway; L-glutamate and succinate from L-arginine: step 4/5. Catalyzes the NAD-dependent reduction of succinylglutamate semialdehyde into succinylglutamate. This Pseudomonas fluorescens (strain ATCC BAA-477 / NRRL B-23932 / Pf-5) protein is N-succinylglutamate 5-semialdehyde dehydrogenase.